A 185-amino-acid chain; its full sequence is Probable chorismate pyruvate-lyase 1 (185 aa).

Residues Arg-68, Leu-106, and Glu-164 each coordinate substrate.

It belongs to the UbiC family.

Its subcellular location is the cytoplasm. The enzyme catalyses chorismate = 4-hydroxybenzoate + pyruvate. Its pathway is cofactor biosynthesis; ubiquinone biosynthesis. In terms of biological role, removes the pyruvyl group from chorismate, with concomitant aromatization of the ring, to provide 4-hydroxybenzoate (4HB) for the ubiquinone pathway. This chain is Probable chorismate pyruvate-lyase 1, found in Pseudomonas entomophila (strain L48).